Consider the following 1478-residue polypeptide: Phospholipase B1, membrane-associated (1478 aa).

The N-terminal stretch at methionine 1–glycine 27 is a signal peptide. The Extracellular segment spans residues serine 28–tyrosine 1422. A run of 4 repeats spans residues tryptophan 43 to serine 351, methionine 366 to serine 711, asparagine 712 to serine 1058, and isoleucine 1068 to serine 1407. Residues tryptophan 43–serine 1407 are 4 X 308-326 AA approximate repeats. Asparagine 180 is a glycosylation site (N-linked (GlcNAc...) asparagine). Catalysis depends on residues serine 404 and aspartate 518. Asparagine 525, asparagine 626, and asparagine 637 each carry an N-linked (GlcNAc...) asparagine glycan. Residue histidine 659 is part of the active site. N-linked (GlcNAc...) asparagine glycosylation is found at asparagine 715, asparagine 764, asparagine 787, asparagine 801, asparagine 830, asparagine 926, asparagine 1227, asparagine 1280, asparagine 1289, and asparagine 1387. A necessary for membrane localization region spans residues glutamine 1408 to glutamine 1450. Residues tryptophan 1423–tryptophan 1443 traverse the membrane as a helical segment. The Cytoplasmic segment spans residues arginine 1444–asparagine 1478. A disordered region spans residues glutamine 1451 to asparagine 1478. Residues leucine 1459–alanine 1468 are compositionally biased toward polar residues. Residues valine 1469 to asparagine 1478 are compositionally biased toward basic and acidic residues.

It belongs to the 'GDSL' lipolytic enzyme family. Phospholipase B1 subfamily. Undergoes proteolytic cleavage in the ileum.

It localises to the apical cell membrane. The enzyme catalyses a 1,2-diacyl-sn-glycero-3-phosphocholine + H2O = a 1-acyl-sn-glycero-3-phosphocholine + a fatty acid + H(+). The catalysed reaction is a 1-O-alkyl-2-acyl-sn-glycero-3-phosphocholine + H2O = a 1-O-alkyl-sn-glycero-3-phosphocholine + a fatty acid + H(+). It catalyses the reaction a 1-acyl-sn-glycero-3-phosphocholine + H2O = sn-glycerol 3-phosphocholine + a fatty acid + H(+). It carries out the reaction a triacylglycerol + H2O = a diacylglycerol + a fatty acid + H(+). The enzyme catalyses 1,2-dihexadecanoyl-sn-glycero-3-phosphocholine + H2O = 1-hexadecanoyl-sn-glycero-3-phosphocholine + hexadecanoate + H(+). The catalysed reaction is 1-hexadecanoyl-2-(9Z-octadecenoyl)-sn-glycero-3-phosphocholine + H2O = 1-hexadecanoyl-sn-glycero-3-phosphocholine + (9Z)-octadecenoate + H(+). It catalyses the reaction 1,2-di-(9Z-octadecenoyl)-sn-glycero-3-phosphocholine + H2O = 1-(9Z-octadecenoyl)-sn-glycero-3-phosphocholine + (9Z)-octadecenoate + H(+). It carries out the reaction 1-hexadecanoyl-2-(9Z,12Z-octadecadienoyl)-sn-glycero-3-phosphocholine + H2O = (9Z,12Z)-octadecadienoate + 1-hexadecanoyl-sn-glycero-3-phosphocholine + H(+). The enzyme catalyses 1-hexadecanoyl-2-(9Z,12Z-octadecadienoyl)-sn-glycero-3-phosphocholine + H2O = 2-(9Z,12Z-octadecadienoyl)-sn-glycero-3-phosphocholine + hexadecanoate + H(+). The catalysed reaction is 1-hexadecanoyl-2-(9Z-octadecenoyl)-sn-glycero-3-phosphoethanolamine + H2O = 1-hexadecanoyl-sn-glycero-3-phosphoethanolamine + (9Z)-octadecenoate + H(+). It catalyses the reaction 1-hexadecanoyl-2-(9Z-octadecenoyl)-sn-glycero-3-phospho-(1'-sn-glycerol) + H2O = 1-hexadecanoyl-sn-glycero-3-phospho-(1'-sn-glycerol) + (9Z)-octadecenoate + H(+). It carries out the reaction 1,2-dihexadecanoyl-sn-glycero-3-phosphocholine + 2 H2O = sn-glycerol 3-phosphocholine + 2 hexadecanoate + 2 H(+). The enzyme catalyses 1-O-hexadecyl-2-(9Z)-octadecenoyl-sn-glycero-3-phosphocholine + H2O = 1-O-hexadecyl-sn-glycero-3-phosphocholine + (9Z)-octadecenoate + H(+). The catalysed reaction is 1-hexadecanoyl-sn-glycero-3-phosphocholine + H2O = sn-glycerol 3-phosphocholine + hexadecanoate + H(+). It catalyses the reaction 1,2,3-tri-(9Z-octadecenoyl)-glycerol + H2O = di-(9Z)-octadecenoylglycerol + (9Z)-octadecenoate + H(+). It carries out the reaction 1-hexadecanoyl-2-(9Z)-octadecenoyl-3-octadecanoyl-sn-glycerol + H2O = 1-hexadecanoyl-2-(9Z-octadecenoyl)-sn-glycerol + octadecanoate + H(+). The enzyme catalyses 1,3-dihexadecanoyl-2-(9Z-octadecenoyl)glycerol + H2O = 1,3-dihexadecanoylglycerol + (9Z)-octadecenoate + H(+). The catalysed reaction is 1,3-dihexadecanoyl-2-(9Z-octadecenoyl)glycerol + H2O = 1-hexadecanoyl-2-(9Z-octadecenoyl)-glycerol + hexadecanoate + H(+). It catalyses the reaction 1-hexadecanoyl-2-(9Z)-octadecenoyl-3-octadecanoyl-sn-glycerol + H2O = 1-hexadecanoyl-3-octadecanoyl-sn-glycerol + (9Z)-octadecenoate + H(+). It carries out the reaction 1-hexadecanoyl-2-(9Z)-octadecenoyl-3-octadecanoyl-sn-glycerol + H2O = 2-(9Z-octadecenoyl)-3-octadecanoyl-sn-glycerol + hexadecanoate + H(+). The enzyme catalyses 1-octadecanoyl-2-(9Z,12Z)-octadecadienoyl-sn-glycerol + H2O = 1-octadecanoyl-sn-glycerol + (9Z,12Z)-octadecadienoate + H(+). The catalysed reaction is 1,2-di-(9Z-octadecenoyl)-sn-glycerol + H2O = 1-(9Z-octadecenoyl)-sn-glycerol + (9Z)-octadecenoate + H(+). It catalyses the reaction 2,3-di-(9Z)-octadecenoyl-sn-glycerol + H2O = 3-(9Z-octadecenoyl)-sn-glycerol + (9Z)-octadecenoate + H(+). It carries out the reaction 1,3-di-(9Z-octadecenoyl)-glycerol + H2O = 1-(9Z-octadecenoyl)-glycerol + (9Z)-octadecenoate + H(+). The enzyme catalyses 1-(9Z-octadecenoyl)-glycerol + H2O = glycerol + (9Z)-octadecenoate + H(+). The catalysed reaction is 2-(9Z-octadecenoyl)-glycerol + H2O = glycerol + (9Z)-octadecenoate + H(+). Functionally, calcium-independent membrane-associated phospholipase that catalyzes complete diacylation of phospholipids by hydrolyzing both sn-1 and sn-2 fatty acyl chains attached to the glycerol backbone (phospholipase B activity). Has dual phospholipase and lysophospholipase activities toward diacylphospholipids. Preferentially cleaves sn-2 ester bonds over sn-1 bonds. Acts as a lipase toward glycerolipid substrates. Hydrolyzes fatty acyl chains of diacylglycerols with preference for the sn-2 position and of triacylglycerols with not positional selectivity. May also hydrolyze long chain retinyl esters such as retinyl palmitate. May contribute to digestion of dietary phospholipids, glycerolipids and retinoids, facilitating lipid absorption at the brush border. The sequence is that of Phospholipase B1, membrane-associated (Plb1) from Mus musculus (Mouse).